The chain runs to 103 residues: Large ribosomal subunit protein uL23 (103 aa).

The protein belongs to the universal ribosomal protein uL23 family. In terms of assembly, part of the 50S ribosomal subunit. Contacts protein L29, and trigger factor when it is bound to the ribosome.

One of the early assembly proteins it binds 23S rRNA. One of the proteins that surrounds the polypeptide exit tunnel on the outside of the ribosome. Forms the main docking site for trigger factor binding to the ribosome. In Chlorobium chlorochromatii (strain CaD3), this protein is Large ribosomal subunit protein uL23.